Consider the following 482-residue polypeptide: Bifunctional protein GlmU (482 aa).

The segment at 1-238 (MSAIRPAAVV…HREIAGINNR (238 aa)) is pyrophosphorylase. UDP-N-acetyl-alpha-D-glucosamine-binding positions include 12–15 (LAAG), K26, Q79, and 84–85 (GT). Residue D110 coordinates Mg(2+). UDP-N-acetyl-alpha-D-glucosamine contacts are provided by G147, E163, N178, and N236. N236 lines the Mg(2+) pocket. A linker region spans residues 239–259 (VQLAEARRILNDRLLTRAMLA). Positions 260–482 (GVTVVDPATT…VASRKPEGED (223 aa)) are N-acetyltransferase. Positions 341 and 359 each coordinate UDP-N-acetyl-alpha-D-glucosamine. Catalysis depends on H371, which acts as the Proton acceptor. UDP-N-acetyl-alpha-D-glucosamine contacts are provided by Y374 and N385. Residues A388, 394–395 (NY), S413, A431, and R448 contribute to the acetyl-CoA site.

The protein in the N-terminal section; belongs to the N-acetylglucosamine-1-phosphate uridyltransferase family. This sequence in the C-terminal section; belongs to the transferase hexapeptide repeat family. Homotrimer. The cofactor is Mg(2+).

The protein resides in the cytoplasm. The catalysed reaction is alpha-D-glucosamine 1-phosphate + acetyl-CoA = N-acetyl-alpha-D-glucosamine 1-phosphate + CoA + H(+). It carries out the reaction N-acetyl-alpha-D-glucosamine 1-phosphate + UTP + H(+) = UDP-N-acetyl-alpha-D-glucosamine + diphosphate. Its pathway is nucleotide-sugar biosynthesis; UDP-N-acetyl-alpha-D-glucosamine biosynthesis; N-acetyl-alpha-D-glucosamine 1-phosphate from alpha-D-glucosamine 6-phosphate (route II): step 2/2. It participates in nucleotide-sugar biosynthesis; UDP-N-acetyl-alpha-D-glucosamine biosynthesis; UDP-N-acetyl-alpha-D-glucosamine from N-acetyl-alpha-D-glucosamine 1-phosphate: step 1/1. The protein operates within bacterial outer membrane biogenesis; LPS lipid A biosynthesis. Its function is as follows. Catalyzes the last two sequential reactions in the de novo biosynthetic pathway for UDP-N-acetylglucosamine (UDP-GlcNAc). The C-terminal domain catalyzes the transfer of acetyl group from acetyl coenzyme A to glucosamine-1-phosphate (GlcN-1-P) to produce N-acetylglucosamine-1-phosphate (GlcNAc-1-P), which is converted into UDP-GlcNAc by the transfer of uridine 5-monophosphate (from uridine 5-triphosphate), a reaction catalyzed by the N-terminal domain. The sequence is that of Bifunctional protein GlmU from Streptomyces avermitilis (strain ATCC 31267 / DSM 46492 / JCM 5070 / NBRC 14893 / NCIMB 12804 / NRRL 8165 / MA-4680).